The following is a 123-amino-acid chain: Large ribosomal subunit protein bL12 (123 aa).

It belongs to the bacterial ribosomal protein bL12 family. Homodimer. Part of the ribosomal stalk of the 50S ribosomal subunit. Forms a multimeric L10(L12)X complex, where L10 forms an elongated spine to which 2 to 4 L12 dimers bind in a sequential fashion. Binds GTP-bound translation factors.

Its function is as follows. Forms part of the ribosomal stalk which helps the ribosome interact with GTP-bound translation factors. Is thus essential for accurate translation. The chain is Large ribosomal subunit protein bL12 from Burkholderia vietnamiensis (strain G4 / LMG 22486) (Burkholderia cepacia (strain R1808)).